Here is a 297-residue protein sequence, read N- to C-terminus: DNA excision repair protein ERCC-1 (297 aa).

Met1 is modified (N-acetylmethionine). Positions 1–39 (MDPGKDKEGVPQPSGPPARKKFVIPLDEDEVPPGVAKPL) are disordered. The Nuclear localization signal signature appears at 17–23 (PARKKFV). Residues Lys21 and Lys37 each participate in a glycyl lysine isopeptide (Lys-Gly) (interchain with G-Cter in SUMO2) cross-link. The DNA-binding element occupies 134–156 (QSTCALFLSLRYHNLHPDYIHGR). The hhH2, dimerization with ERCC4/XPF stretch occupies residues 220 to 297 (ADLLMEKLEQ…VLHEPFLKVP (78 aa)). Lys243 participates in a covalent cross-link: Glycyl lysine isopeptide (Lys-Gly) (interchain with G-Cter in SUMO2).

The protein belongs to the ERCC1/RAD10/SWI10 family. Heterodimer composed of ERCC1 isoform 1 and ERCC4/XPF. Interacts with USP45. In terms of assembly, does not interact with ERCC4/XPF. In terms of processing, ubiquitinated with both 'Lys-48' and 'Lys-63' linkages. Deubiquitinated by USP45.

It localises to the nucleus. The protein resides in the cytoplasm. In terms of biological role, non-catalytic component of a structure-specific DNA repair endonuclease responsible for the 5'-incision during DNA repair. Responsible, in conjunction with SLX4, for the first step in the repair of interstrand cross-links (ICL). Participates in the processing of anaphase bridge-generating DNA structures, which consist in incompletely processed DNA lesions arising during S or G2 phase, and can result in cytokinesis failure. Also required for homology-directed repair (HDR) of DNA double-strand breaks, in conjunction with SLX4. Functionally, not functional in the nucleotide excision repair pathway. The polypeptide is DNA excision repair protein ERCC-1 (ERCC1) (Homo sapiens (Human)).